A 649-amino-acid polypeptide reads, in one-letter code: Leucine-rich repeat transmembrane protein FLRT3 (649 aa).

The N-terminal stretch at 1-28 is a signal peptide; the sequence is MISPAWSIFLIGTKIGLFLQVAPLSVMA. The 30-residue stretch at 29–58 folds into the LRRNT domain; sequence KSCPSVCRCDAGFIYCNDRFLTSIPTGIPE. Residues 29–528 lie on the Extracellular side of the membrane; sequence KSCPSVCRCD…KEPYKNPNLP (500 aa). Disulfide bonds link Cys-31/Cys-37 and Cys-35/Cys-44. An interaction with ADGRL3 region spans residues 38-67; that stretch reads DAGFIYCNDRFLTSIPTGIPEDATTLYLQN. LRR repeat units lie at residues 59 to 80, 84 to 104, 105 to 126, 129 to 150, 155 to 176, 177 to 197, 200 to 220, 226 to 247, 248 to 269, and 272 to 293; these read DATTLYLQNNQINNAGIPSDLK, KVERIYLYHNSLDEFPTNLPK, YVKELHLQENNIRTITYDSLSK, YLEELRLDDNSVSAVSIEEGAF, YLRLLFLSRNHLSTIPWGLPRT, IEELRLDDNRIPTISSPSLQG, SLKRLVLDGNLLNNHGLGDKV, NLTELSLVRNSLTAAPVNLPGT, NLRKLYLQDNHINRVPPNAFSY, and QLYRLDMSNNNLSNLPQGIFDD. A glycan (N-linked (GlcNAc...) asparagine) is linked at Asn-226. Asn-282 and Asn-296 each carry an N-linked (GlcNAc...) asparagine glycan. In terms of domain architecture, LRRCT spans 305 to 357; it reads NPWYCGCKMKWVRDWLQSLPVKVNVRGLMCQAPEKVRGMAIKDLNAELFDCKD. Cys-309 and Cys-334 are disulfide-bonded. The disordered stretch occupies residues 385–407; the sequence is VTKQPDIKNPKLTKDHQTTGSPS. Residues 389–401 are compositionally biased toward basic and acidic residues; the sequence is PDIKNPKLTKDHQ. In terms of domain architecture, Fibronectin type-III spans 409 to 504; the sequence is KTITITVKSV…VCIETETAPL (96 aa). Residues 529-549 form a helical membrane-spanning segment; sequence LAAIIGGAVALVTIALLALVC. The Cytoplasmic portion of the chain corresponds to 550–649; sequence WYVHRNGSLF…GIPDSDHSHS (100 aa). Residues 622-649 form a disordered region; it reads LYKNNHSESSSNRSYRDSGIPDSDHSHS.

As to quaternary structure, monomer and homodimer. Self-associates (via leucine-rich repeats), giving rise to homooligomers. Interacts with FGFR1. Interacts (via extracellular domain) with ADGRL1/LPHN1 and LPHN2 (via olfactomedin-like domain). Interacts (via extracellular domain) with ADGRL3 (via olfactomedin-like domain); the interaction is direct. Interacts (via extracellular domain) with UNC5B and UNC5D (via extracellular domain); the interaction is direct. Identified in complexes composed of FLRT3, ADGRL3 and UNC5B, respectively FLRT3, ADGRL3 and UNC5D. May also interact (via extracellular domain) with UNC5A and UNC5C. Interacts (via cytoplasmic domain) with ROBO1. In terms of processing, N-glycosylated. Post-translationally, proteolytic cleavage in the juxtamembrane region gives rise to a soluble ectodomain. Cleavage is probably effected by a metalloprotease.

It is found in the cell membrane. The protein resides in the presynaptic cell membrane. Its subcellular location is the endoplasmic reticulum membrane. It localises to the cell junction. The protein localises to the focal adhesion. It is found in the secreted. The protein resides in the cell projection. Its subcellular location is the axon. It localises to the growth cone membrane. Functions in cell-cell adhesion, cell migration and axon guidance, exerting an attractive or repulsive role depending on its interaction partners. Plays a role in the spatial organization of brain neurons. Plays a role in vascular development in the retina. Plays a role in cell-cell adhesion via its interaction with ADGRL3 and probably also other latrophilins that are expressed at the surface of adjacent cells. Interaction with the intracellular domain of ROBO1 mediates axon attraction towards cells expressing NTN1. Mediates axon growth cone collapse and plays a repulsive role in neuron guidance via its interaction with UNC5B, and possibly also other UNC-5 family members. Promotes neurite outgrowth (in vitro). Mediates cell-cell contacts that promote an increase both in neurite number and in neurite length. Plays a role in the regulation of the density of glutamaergic synapses. Plays a role in fibroblast growth factor-mediated signaling cascades. Required for normal morphogenesis during embryonic development, but not for normal embryonic patterning. Required for normal ventral closure, headfold fusion and definitive endoderm migration during embryonic development. Required for the formation of a normal basement membrane and the maintenance of a normal anterior visceral endoderm during embryonic development. The polypeptide is Leucine-rich repeat transmembrane protein FLRT3 (FLRT3) (Pongo abelii (Sumatran orangutan)).